Here is a 55-residue protein sequence, read N- to C-terminus: MPQLDPAPWFSMLTVSWLIIFLLIMPTILFYQPQNTISTKQVTKPKQSTWTWPWH.

The helical transmembrane segment at 4-24 threads the bilayer; sequence LDPAPWFSMLTVSWLIIFLLI.

The protein belongs to the ATPase protein 8 family. F-type ATPases have 2 components, CF(1) - the catalytic core - and CF(0) - the membrane proton channel.

The protein resides in the mitochondrion membrane. In terms of biological role, mitochondrial membrane ATP synthase (F(1)F(0) ATP synthase or Complex V) produces ATP from ADP in the presence of a proton gradient across the membrane which is generated by electron transport complexes of the respiratory chain. F-type ATPases consist of two structural domains, F(1) - containing the extramembraneous catalytic core and F(0) - containing the membrane proton channel, linked together by a central stalk and a peripheral stalk. During catalysis, ATP synthesis in the catalytic domain of F(1) is coupled via a rotary mechanism of the central stalk subunits to proton translocation. Part of the complex F(0) domain. Minor subunit located with subunit a in the membrane. This is ATP synthase protein 8 (MT-ATP8) from Petromyzon marinus (Sea lamprey).